The chain runs to 431 residues: Enolase (431 aa).

Substrate is bound by residues His-157 and Glu-166. Glu-209 functions as the Proton donor in the catalytic mechanism. Residues Asp-244, Glu-293, and Asp-318 each coordinate Mg(2+). Positions 293 and 318 each coordinate substrate. Residue Lys-343 is the Proton acceptor of the active site. Substrate is bound by residues 370-373 and Lys-394; that span reads SHRS.

The protein belongs to the enolase family. Homodimer. It depends on Mg(2+) as a cofactor.

The protein localises to the cytoplasm. The enzyme catalyses (2R)-2-phosphoglycerate = phosphoenolpyruvate + H2O. It participates in carbohydrate degradation; glycolysis; pyruvate from D-glyceraldehyde 3-phosphate: step 4/5. In Fasciola hepatica (Liver fluke), this protein is Enolase (ENO).